A 390-amino-acid polypeptide reads, in one-letter code: Caveolae-associated protein 1 (390 aa).

Methionine 1 carries the N-acetylmethionine modification. The interval 1–40 is disordered; it reads MEDPTLYIVERPLPGYPDAEAPEPSSAGAQAAEEPSGAGS. The tract at residues 1-98 is required for homotrimerization and for interaction with CAVIN2 and CAVIN3; the sequence is MEDPTLYIVE…IQGELSKLGK (98 aa). Residues 22–40 are compositionally biased toward low complexity; that stretch reads PEPSSAGAQAAEEPSGAGS. Phosphoserine occurs at positions 36, 40, and 46. Positions 52-62 are nuclear export signal; that stretch reads VLVLSLLDKII. Positions 53-75 are leucine-zipper 1; that stretch reads LVLSLLDKIIGAVDQIQLTQAQL. A Glycyl lysine isopeptide (Lys-Gly) (interchain with G-Cter in SUMO2) cross-link involves residue lysine 116. Serine 118 bears the Phosphoserine mark. Lysine 122 participates in a covalent cross-link: Glycyl lysine isopeptide (Lys-Gly) (interchain with G-Cter in SUMO2). The nuclear localization signal stretch occupies residues 136–152; sequence KKLEVNEAELLRRRNFK. Position 156 is a phosphotyrosine (tyrosine 156). Lysine 161 participates in a covalent cross-link: Glycyl lysine isopeptide (Lys-Gly) (interchain with G-Cter in SUMO1); alternate. Lysine 161 is covalently cross-linked (Glycyl lysine isopeptide (Lys-Gly) (interchain with G-Cter in SUMO2); alternate). Residue lysine 165 forms a Glycyl lysine isopeptide (Lys-Gly) (interchain with G-Cter in SUMO2) linkage. Residues 166–186 are leucine-zipper 2; sequence LSISKSLKESEALPEKEGEEL. Residues serine 167 and serine 169 each carry the phosphoserine modification. A Glycyl lysine isopeptide (Lys-Gly) (interchain with G-Cter in SUMO2) cross-link involves residue lysine 170. A phosphoserine mark is found at serine 171 and serine 175. Basic and acidic residues predominate over residues 172–181; that stretch reads LKESEALPEK. The disordered stretch occupies residues 172–201; sequence LKESEALPEKEGEELGEGERPEEDAAALEL. Residues 182-201 are compositionally biased toward acidic residues; the sequence is EGEELGEGERPEEDAAALEL. Residues 199 to 282 are a coiled coil; sequence LELSSDEAVE…RMNKLGTRLV (84 aa). Serine 202 and serine 203 each carry phosphoserine. The nuclear localization signal stretch occupies residues 233 to 249; sequence KKAFSKEKMEKTKVRTR. Residues 257–297 form a leucine-zipper 3 region; it reads LKTKENLEKTRHTLEKRMNKLGTRLVPAERREKLKTSRDKL. Position 300 is a phosphoserine (serine 300). At threonine 302 the chain carries Phosphothreonine. The residue at position 308 (tyrosine 308) is a Phosphotyrosine. A Glycyl lysine isopeptide (Lys-Gly) (interchain with G-Cter in SUMO2) cross-link involves residue lysine 326. The segment at 344–366 is disordered; that stretch reads VGADDDEGGAERGEAGDLRRGSS. The segment covering 352–365 has biased composition (basic and acidic residues); that stretch reads GAERGEAGDLRRGS. 5 positions are modified to phosphoserine: serine 365, serine 366, serine 379, serine 387, and serine 389.

Belongs to the CAVIN family. In terms of assembly, component of the CAVIN complex composed of CAVIN1, CAVIN2, CAVIN3 and CAVIN4. Homotrimer. Interacts with TTF1. Interacts with RNA polymerase I subunit POLR1A/RPA1. Binds the 3' end of pre-rRNA. Interacts with transcription factor ZNF148. Interacts with LIPE in the adipocyte cytoplasm. Interacts with CAV1 and CAVIN3. Interacts with CAVIN2. Interacts with CAVIN4 and CAV3. Phosphorylated. Present in active and inactive forms. Changes in phosphorylation pattern may alter activity. Phosphorylation at Tyr-156 is essential for its functionin the regulation of ribosomal transcriptional activity. In terms of processing, five truncated forms are found in the caveolae. These are thought to be the result of proteolysis and may be phosphorylation-dependent. Post-translationally, monoubiquitinated.

The protein localises to the membrane. It localises to the caveola. Its subcellular location is the cell membrane. It is found in the microsome. The protein resides in the endoplasmic reticulum. The protein localises to the cytoplasm. It localises to the cytosol. Its subcellular location is the mitochondrion. It is found in the nucleus. In terms of biological role, plays an important role in caveolae formation and organization. Essential for the formation of caveolae in all tissues. Core component of the CAVIN complex which is essential for recruitment of the complex to the caveolae in presence of calveolin-1 (CAV1). Essential for normal oligomerization of CAV1. Promotes ribosomal transcriptional activity in response to metabolic challenges in the adipocytes and plays an important role in the formation of the ribosomal transcriptional loop. Dissociates transcription complexes paused by DNA-bound TTF1, thereby releasing both RNA polymerase I and pre-RNA from the template. The caveolae biogenesis pathway is required for the secretion of proteins such as GASK1A. This chain is Caveolae-associated protein 1, found in Homo sapiens (Human).